We begin with the raw amino-acid sequence, 505 residues long: Glycerol kinase (505 aa).

ADP is bound at residue T12. T12, T13, and S14 together coordinate ATP. T12 provides a ligand contact to sn-glycerol 3-phosphate. ADP is bound at residue R16. R82, E83, Y134, and D246 together coordinate sn-glycerol 3-phosphate. The glycerol site is built by R82, E83, Y134, D246, and Q247. The ADP site is built by T268 and G312. ATP contacts are provided by T268, G312, Q316, and G413. Residues G413 and N417 each coordinate ADP.

It belongs to the FGGY kinase family.

It catalyses the reaction glycerol + ATP = sn-glycerol 3-phosphate + ADP + H(+). Its pathway is polyol metabolism; glycerol degradation via glycerol kinase pathway; sn-glycerol 3-phosphate from glycerol: step 1/1. Its activity is regulated as follows. Inhibited by fructose 1,6-bisphosphate (FBP). In terms of biological role, key enzyme in the regulation of glycerol uptake and metabolism. Catalyzes the phosphorylation of glycerol to yield sn-glycerol 3-phosphate. The sequence is that of Glycerol kinase from Beutenbergia cavernae (strain ATCC BAA-8 / DSM 12333 / CCUG 43141 / JCM 11478 / NBRC 16432 / NCIMB 13614 / HKI 0122).